The chain runs to 156 residues: ATP synthase subunit b (156 aa).

Residues 7-27 (IFFQMLVFFVLGWFTMKFVWP) traverse the membrane as a helical segment.

The protein belongs to the ATPase B chain family. In terms of assembly, F-type ATPases have 2 components, F(1) - the catalytic core - and F(0) - the membrane proton channel. F(1) has five subunits: alpha(3), beta(3), gamma(1), delta(1), epsilon(1). F(0) has three main subunits: a(1), b(2) and c(10-14). The alpha and beta chains form an alternating ring which encloses part of the gamma chain. F(1) is attached to F(0) by a central stalk formed by the gamma and epsilon chains, while a peripheral stalk is formed by the delta and b chains.

It is found in the cell inner membrane. F(1)F(0) ATP synthase produces ATP from ADP in the presence of a proton or sodium gradient. F-type ATPases consist of two structural domains, F(1) containing the extramembraneous catalytic core and F(0) containing the membrane proton channel, linked together by a central stalk and a peripheral stalk. During catalysis, ATP synthesis in the catalytic domain of F(1) is coupled via a rotary mechanism of the central stalk subunits to proton translocation. In terms of biological role, component of the F(0) channel, it forms part of the peripheral stalk, linking F(1) to F(0). The polypeptide is ATP synthase subunit b (Bordetella pertussis (strain Tohama I / ATCC BAA-589 / NCTC 13251)).